A 123-amino-acid polypeptide reads, in one-letter code: MIQQESRLKVADNTGAKSLSVIRVLGGSNRRFGSLGDVVVASVKDAVPGSSAVKKGDVVKAVIVRSTKEVRRTDGSYIRFDDNAAVILRPDNDPRGTRIFGPVARELRDRKFTRIISLAPEVV.

The protein belongs to the universal ribosomal protein uL14 family. In terms of assembly, part of the 50S ribosomal subunit. Forms a cluster with proteins L3 and L19. In the 70S ribosome, L14 and L19 interact and together make contacts with the 16S rRNA in bridges B5 and B8.

Functionally, binds to 23S rRNA. Forms part of two intersubunit bridges in the 70S ribosome. In Tropheryma whipplei (strain TW08/27) (Whipple's bacillus), this protein is Large ribosomal subunit protein uL14.